Reading from the N-terminus, the 222-residue chain is MVTIWLGSGRMLVLASASPRRAMLLEAEGFSFIRVEADVSEVLPQGISPESAVKGLALRKAQAGLNRWLNHGGSREDIILGADTIVVLNQQILGKPRDEEEAEAMLTALSGQTHYVYTGVALVNGAGRQECGAVCTAVFFRSLTHEEILEYIATGEPVDKAGAYGIQGLGGHLVDHYEGSLSNVIGLPMEYVKERLSVWGMGLGDIALHEVKDGLPSVKGST.

Asp-83 acts as the Proton acceptor in catalysis.

It belongs to the Maf family. YhdE subfamily. Requires a divalent metal cation as cofactor.

It is found in the cytoplasm. The enzyme catalyses dTTP + H2O = dTMP + diphosphate + H(+). The catalysed reaction is UTP + H2O = UMP + diphosphate + H(+). In terms of biological role, nucleoside triphosphate pyrophosphatase that hydrolyzes dTTP and UTP. May have a dual role in cell division arrest and in preventing the incorporation of modified nucleotides into cellular nucleic acids. The chain is dTTP/UTP pyrophosphatase from Desulfitobacterium hafniense (strain Y51).